Consider the following 555-residue polypeptide: Probable Xaa-Pro aminopeptidase BC1G_13431 (555 aa).

4 residues coordinate Mn(2+): aspartate 303, aspartate 314, glutamate 458, and glutamate 499. The segment at 527–555 (EGKEQEEEEEREANRKATESRKQKKTWFW) is disordered. Residues 538-547 (EANRKATESR) are compositionally biased toward basic and acidic residues.

This sequence belongs to the peptidase M24B family. Mn(2+) serves as cofactor.

The catalysed reaction is Release of any N-terminal amino acid, including proline, that is linked to proline, even from a dipeptide or tripeptide.. In terms of biological role, catalyzes the removal of a penultimate prolyl residue from the N-termini of peptides. The protein is Probable Xaa-Pro aminopeptidase BC1G_13431 of Botryotinia fuckeliana (strain B05.10) (Noble rot fungus).